Reading from the N-terminus, the 592-residue chain is Ichor (592 aa).

Positions 114 to 123 (NNNYMQSAYH) are enriched in polar residues. Disordered stretches follow at residues 114–156 (NNNY…VSSS), 343–377 (LQNR…QAPT), 416–439 (LSNP…MQAS), and 459–527 (HTTT…DLSG). The segment covering 124–148 (PQNQSNPTSTTQSNGGSNSNSNNSN) has biased composition (low complexity). Over residues 356 to 369 (SSGGGGGANQGAGI) the composition is skewed to gly residues. Residues 459–469 (HTTTASTTGSE) are compositionally biased toward polar residues. Residues 488–500 (QQQQQQQQQQQQQ) show a composition bias toward low complexity. Over residues 507 to 524 (PTTPQMSAISPSGFSASD) the composition is skewed to polar residues. 2 C2H2-type zinc fingers span residues 536 to 558 (HRCS…LRTH) and 564 to 586 (FRCD…QQIH).

It is found in the nucleus. In terms of biological role, transcriptional activator. In tracheal terminal cells, regulates the transcription of factors involved in the formation of a mature apical extracellular matrix (aECM) which is essential for the integrity and shape of seamless tubes. This chain is Ichor, found in Drosophila melanogaster (Fruit fly).